The sequence spans 196 residues: ATP-dependent Clp protease proteolytic subunit (196 aa).

Catalysis depends on S101, which acts as the Nucleophile. The active site involves H126.

This sequence belongs to the peptidase S14 family. As to quaternary structure, component of the chloroplastic Clp protease core complex.

Its subcellular location is the plastid. The protein resides in the chloroplast stroma. It catalyses the reaction Hydrolysis of proteins to small peptides in the presence of ATP and magnesium. alpha-casein is the usual test substrate. In the absence of ATP, only oligopeptides shorter than five residues are hydrolyzed (such as succinyl-Leu-Tyr-|-NHMec, and Leu-Tyr-Leu-|-Tyr-Trp, in which cleavage of the -Tyr-|-Leu- and -Tyr-|-Trp bonds also occurs).. In terms of biological role, cleaves peptides in various proteins in a process that requires ATP hydrolysis. Has a chymotrypsin-like activity. Plays a major role in the degradation of misfolded proteins. The chain is ATP-dependent Clp protease proteolytic subunit from Lactuca sativa (Garden lettuce).